The sequence spans 234 residues: MAAAKQRKPHVSRNPELVRGIGKYSRSKMYHKRGLWAIKAKNGGVFPKHAPKSADSKAVEKPPKFYPADDVKKPLINKRKPKPTKLRASITPGTVLIILAGRFKGKRVVFLKQLSSGLLLVTGPFKVNGVPLRRVNQAYVIATSTKVDISGVNVEKFDDKYFGKKAEKKNKKGEGEFFEAEKKEVNVLPQEKKDDQKAVDVALLKAIEGVPELKAYLGARFSLKAGMKPHELVF.

The protein belongs to the eukaryotic ribosomal protein eL6 family.

This chain is Large ribosomal subunit protein eL6 (RPL6), found in Mesembryanthemum crystallinum (Common ice plant).